Consider the following 325-residue polypeptide: TNFAIP3-interacting protein 3 (325 aa).

2 disordered regions span residues 1–30 (MAHF…STRK) and 84–129 (RFLS…RLNE). Residues 17 to 28 (STEHKECAEPST) show a composition bias toward basic and acidic residues. Residues 27 to 265 (STRKNLMNSL…LEKQLKQMYC (239 aa)) are a coiled coil. The interval 190 to 248 (HEEMRTEMEVLKQQVQIYEEDFKKERSDRERLNQEKEELQQINETSQSQLNRLNSQIKA) is ubiquitin-binding domain (UBD).

In terms of assembly, interacts with TNFAIP3. Interacts with polyubiquitin. Highly expressed in lung, lymph node, thymus and fetal liver. Expressed at lower levels in bone marrow, brain, kidney, spleen, leukocytes and tonsils. Could be detected in heart, salivary gland, adrenal gland, pancreas, ovary and fetal brain. High levels detected in liver, colon, small intestine, muscle, stomach, testis, placenta, thyroid, uterus, prostate, skin and PBL.

Its function is as follows. Binds to zinc finger protein TNFAIP3 and inhibits NF-kappa-B activation induced by tumor necrosis factor, Toll-like receptor 4 (TLR4), interleukin-1 and 12-O-tetradecanoylphorbol-13-acetate. Overexpression inhibits NF-kappa-B-dependent gene expression in response to lipopolysaccharide at a level downstream of TRAF6 and upstream of IKBKB. NF-kappa-B inhibition is independent of TNFAIP3 binding. The polypeptide is TNFAIP3-interacting protein 3 (Homo sapiens (Human)).